Consider the following 87-residue polypeptide: MKFRLGGFEAIKSAYMAQVQYSMWVTRKDAWYFANYDPRMKREGLHYVVIERNEKYMASFDEMVPEFIEKMDEALAEIGFVFGEQWR.

This sequence to bacteriophage lambda exonuclease exo.

This is an uncharacterized protein from Escherichia coli (strain K12).